Consider the following 208-residue polypeptide: Ubiquitin-conjugating enzyme E2 S (208 aa).

A UBC core domain is found at 14-160; it reads QTIRQVMKEL…ARMMTEIHAQ (147 aa). The active-site Glycyl thioester intermediate is the Cys-98. A disordered region spans residues 161 to 193; it reads PAKCGAGASDAKDDDGPSTKKHAGLDKKLQDKK. Positions 170-193 are enriched in basic and acidic residues; it reads DAKDDDGPSTKKHAGLDKKLQDKK.

The protein belongs to the ubiquitin-conjugating enzyme family.

It catalyses the reaction S-ubiquitinyl-[E1 ubiquitin-activating enzyme]-L-cysteine + [E2 ubiquitin-conjugating enzyme]-L-cysteine = [E1 ubiquitin-activating enzyme]-L-cysteine + S-ubiquitinyl-[E2 ubiquitin-conjugating enzyme]-L-cysteine.. It participates in protein modification; protein ubiquitination. In terms of biological role, catalyzes the covalent attachment of ubiquitin to other proteins. Acts as an essential factor of the anaphase promoting complex/cyclosome (APC/C), a cell cycle-regulated ubiquitin ligase that controls progression through mitosis. Acts by specifically elongating polyubiquitin chains initiated by the E2 enzyme vih/UbcH10 on APC/C substrates, enhancing the degradation of APC/C substrates by the proteasome and promoting mitotic exit. The chain is Ubiquitin-conjugating enzyme E2 S from Drosophila virilis (Fruit fly).